The sequence spans 432 residues: Adenylosuccinate synthetase (432 aa).

Residues 13–19 (GDEGKGK) and 41–43 (GHT) each bind GTP. The active-site Proton acceptor is Asp14. The Mg(2+) site is built by Asp14 and Gly41. Residues 14–17 (DEGK), 39–42 (NAGH), Thr130, Arg144, Gln225, Thr240, and Arg304 contribute to the IMP site. His42 (proton donor) is an active-site residue. 300 to 306 (AVTGRPR) contacts substrate. Residues Arg306, 332 to 334 (KLD), and 415 to 417 (STG) contribute to the GTP site.

It belongs to the adenylosuccinate synthetase family. As to quaternary structure, homodimer. Mg(2+) is required as a cofactor.

The protein resides in the cytoplasm. The catalysed reaction is IMP + L-aspartate + GTP = N(6)-(1,2-dicarboxyethyl)-AMP + GDP + phosphate + 2 H(+). It participates in purine metabolism; AMP biosynthesis via de novo pathway; AMP from IMP: step 1/2. Plays an important role in the de novo pathway of purine nucleotide biosynthesis. Catalyzes the first committed step in the biosynthesis of AMP from IMP. This is Adenylosuccinate synthetase from Histophilus somni (strain 129Pt) (Haemophilus somnus).